The following is a 349-amino-acid chain: Heparin sulfate O-sulfotransferase (349 aa).

The Cytoplasmic segment spans residues 1–17 (MFRKLLKMWILLRPTHW). A helical; Signal-anchor for type II membrane protein transmembrane segment spans residues 18 to 38 (LILIALCAVTCAGYWLLWSEI). The Lumenal segment spans residues 39 to 349 (RLEHAFKPLS…KFMYEKIRPK (311 aa)). Residues Asn-107 and Asn-126 are each glycosylated (N-linked (GlcNAc...) asparagine). Active-site residues include His-139 and His-141. 2 cysteine pairs are disulfide-bonded: Cys-200/Cys-208 and Cys-221/Cys-227. Asn-282 carries an N-linked (GlcNAc...) asparagine glycan.

It belongs to the sulfotransferase 3 family. In terms of assembly, homotrimer.

Its subcellular location is the golgi apparatus membrane. Its function is as follows. Catalyzes the transfer of sulfate to the C2-position of selected hexuronic acid residues within the maturing heparan sulfate (HS). This chain is Heparin sulfate O-sulfotransferase, found in Drosophila melanogaster (Fruit fly).